The chain runs to 502 residues: Glycerol kinase (502 aa).

ADP is bound at residue Thr13. ATP-binding residues include Thr13, Thr14, and Ser15. Thr13 contributes to the sn-glycerol 3-phosphate binding site. Position 17 (Arg17) interacts with ADP. Sn-glycerol 3-phosphate is bound by residues Arg83, Glu84, Tyr136, and Asp246. Glycerol-binding residues include Arg83, Glu84, Tyr136, Asp246, and Gln247. Positions 268 and 311 each coordinate ADP. The ATP site is built by Thr268, Gly311, Gln315, and Gly412. ADP contacts are provided by Gly412 and Asn416.

The protein belongs to the FGGY kinase family.

The enzyme catalyses glycerol + ATP = sn-glycerol 3-phosphate + ADP + H(+). It functions in the pathway polyol metabolism; glycerol degradation via glycerol kinase pathway; sn-glycerol 3-phosphate from glycerol: step 1/1. With respect to regulation, inhibited by fructose 1,6-bisphosphate (FBP). Its function is as follows. Key enzyme in the regulation of glycerol uptake and metabolism. Catalyzes the phosphorylation of glycerol to yield sn-glycerol 3-phosphate. In Francisella tularensis subsp. tularensis (strain WY96-3418), this protein is Glycerol kinase.